A 156-amino-acid polypeptide reads, in one-letter code: Snaclec stejaggregin-B subunit alpha (156 aa).

The N-terminal stretch at 1 to 23 (MGRFISVSFGLLVVFLSLSGTGA) is a signal peptide. 3 disulfides stabilise this stretch: cysteine 25/cysteine 36, cysteine 53/cysteine 150, and cysteine 125/cysteine 142. The 120-residue stretch at 32–151 (FKQYCYQIIK…CEQKHLFMCK (120 aa)) folds into the C-type lectin domain.

It belongs to the snaclec family. In terms of assembly, heteromultimer; disulfide-linked. As to expression, expressed by the venom gland.

It is found in the secreted. Its function is as follows. Interferes with one step of hemostasis (modulation of platelet aggregation, or coagulation cascade, for example). The protein is Snaclec stejaggregin-B subunit alpha of Trimeresurus stejnegeri (Chinese green tree viper).